The chain runs to 164 residues: Lipoprotein signal peptidase (164 aa).

Helical transmembrane passes span 11–31 (YWVLALAAIVLDQWSKWAVLS), 41–61 (VIPSFFDLTLVYNPGAAFSFL), 64–84 (QGGWQKYFFLVLAVAVSAYLV), and 92–112 (FAALGKIGAAMIIGGASGNVI). Residues D122 and D140 contribute to the active site. Residues 132–152 (FYPAFNIADSFICVGAVLAVL) form a helical membrane-spanning segment.

The protein belongs to the peptidase A8 family.

Its subcellular location is the cell inner membrane. It catalyses the reaction Release of signal peptides from bacterial membrane prolipoproteins. Hydrolyzes -Xaa-Yaa-Zaa-|-(S,diacylglyceryl)Cys-, in which Xaa is hydrophobic (preferably Leu), and Yaa (Ala or Ser) and Zaa (Gly or Ala) have small, neutral side chains.. Its pathway is protein modification; lipoprotein biosynthesis (signal peptide cleavage). Functionally, this protein specifically catalyzes the removal of signal peptides from prolipoproteins. The chain is Lipoprotein signal peptidase from Neisseria gonorrhoeae (strain ATCC 700825 / FA 1090).